Consider the following 414-residue polypeptide: 3-aminobutyryl-CoA aminotransferase (414 aa).

Lys261 bears the N6-(pyridoxal phosphate)lysine mark.

It belongs to the class-III pyridoxal-phosphate-dependent aminotransferase family. As to quaternary structure, homodimer. Pyridoxal 5'-phosphate serves as cofactor.

The catalysed reaction is (3S)-3-aminobutanoyl-CoA + 2-oxoglutarate = acetoacetyl-CoA + L-glutamate. The protein operates within amino-acid degradation; L-lysine degradation via acetate pathway. 3-aminobutyryl-CoA aminotransferase that acts specifically on coenzyme A (CoA) esters and catalyzes the conversion of 3-aminobutyryl-CoA into acetoacetyl-CoA in an alternative pathway of lysine fermentation. The protein is 3-aminobutyryl-CoA aminotransferase (kat) of Cloacimonas acidaminovorans (strain Evry).